A 279-amino-acid polypeptide reads, in one-letter code: B3 domain-containing protein Os11g0156000 (279 aa).

The TF-B3 DNA-binding region spans 38–144 (FEKPLTPSDV…DRLFIGCRRR (107 aa)). 2 disordered regions span residues 148 to 182 (AAAQTPAPPPAVRVAPAAQNAGEQQPWSPMCYSTS) and 203 to 228 (HDHGDMHHADESPRDTDSPSFSAGSA). The span at 159-168 (VRVAPAAQNA) shows a compositional bias: low complexity. Over residues 203–219 (HDHGDMHHADESPRDTD) the composition is skewed to basic and acidic residues.

It is found in the nucleus. In Oryza sativa subsp. japonica (Rice), this protein is B3 domain-containing protein Os11g0156000.